We begin with the raw amino-acid sequence, 460 residues long: Methionine aminopeptidase 2-1 (460 aa).

The disordered stretch occupies residues 1–90; that stretch reads MGSKSPNGED…SAQAAQQTAP (90 aa). Over residues 30–39 the composition is skewed to low complexity; the sequence is SAAASGLLRG. Residues 42–52 are compositionally biased toward acidic residues; that stretch reads EDQDEDGDDDE. Residues 69–81 are compositionally biased toward basic residues; that stretch reads TKKRRRNNKKKKS. A substrate-binding site is contributed by His212. Positions 233, 244, and 313 each coordinate a divalent metal cation. His321 lines the substrate pocket. 2 residues coordinate a divalent metal cation: Glu346 and Glu441.

It belongs to the peptidase M24A family. Methionine aminopeptidase eukaryotic type 2 subfamily. Requires Co(2+) as cofactor. Zn(2+) is required as a cofactor. The cofactor is Mn(2+). It depends on Fe(2+) as a cofactor.

The protein resides in the cytoplasm. It carries out the reaction Release of N-terminal amino acids, preferentially methionine, from peptides and arylamides.. Its function is as follows. Cotranslationally removes the N-terminal methionine from nascent proteins. The N-terminal methionine is often cleaved when the second residue in the primary sequence is small and uncharged (Met-Ala-, Cys, Gly, Pro, Ser, Thr, or Val). This Leptosphaeria maculans (strain JN3 / isolate v23.1.3 / race Av1-4-5-6-7-8) (Blackleg fungus) protein is Methionine aminopeptidase 2-1.